The primary structure comprises 451 residues: Tubulin alpha-2 chain (451 aa).

Residue glutamine 11 participates in GTP binding. Residue lysine 40 is modified to N6-acetyllysine. Positions 71, 140, 144, 145, 179, 206, and 228 each coordinate GTP. Glutamate 71 provides a ligand contact to Mg(2+). Glutamate 254 is an active-site residue. Positions 432–451 are disordered; that stretch reads YEEVGIDTADGEDDEEANDY.

It belongs to the tubulin family. As to quaternary structure, dimer of alpha and beta chains. A typical microtubule is a hollow water-filled tube with an outer diameter of 25 nm and an inner diameter of 15 nM. Alpha-beta heterodimers associate head-to-tail to form protofilaments running lengthwise along the microtubule wall with the beta-tubulin subunit facing the microtubule plus end conferring a structural polarity. Microtubules usually have 13 protofilaments but different protofilament numbers can be found in some organisms and specialized cells. The cofactor is Mg(2+). Undergoes a tyrosination/detyrosination cycle, the cyclic removal and re-addition of a C-terminal tyrosine residue by the enzymes tubulin tyrosine carboxypeptidase (TTCP) and tubulin tyrosine ligase (TTL), respectively. In terms of processing, acetylation of alpha chains at Lys-40 stabilizes microtubules and affects affinity and processivity of microtubule motors. This modification has a role in multiple cellular functions, ranging from cell motility, cell cycle progression or cell differentiation to intracellular trafficking and signaling.

The protein localises to the cytoplasm. It localises to the cytoskeleton. It catalyses the reaction GTP + H2O = GDP + phosphate + H(+). In terms of biological role, tubulin is the major constituent of microtubules, a cylinder consisting of laterally associated linear protofilaments composed of alpha- and beta-tubulin heterodimers. Microtubules grow by the addition of GTP-tubulin dimers to the microtubule end, where a stabilizing cap forms. Below the cap, tubulin dimers are in GDP-bound state, owing to GTPase activity of alpha-tubulin. The sequence is that of Tubulin alpha-2 chain from Homarus americanus (American lobster).